A 302-amino-acid chain; its full sequence is Oxygen-dependent coproporphyrinogen-III oxidase (302 aa).

Ser-94 contributes to the substrate binding site. A divalent metal cation contacts are provided by His-98 and His-108. The active-site Proton donor is His-108. Residue 110–112 (NVR) coordinates substrate. His-147 and His-177 together coordinate a divalent metal cation. The tract at residues 242 to 277 (YVEFNLVYDRGTLFGLQTGGRTESILMSMPPLARWE) is important for dimerization. 260-262 (GGR) provides a ligand contact to substrate.

Belongs to the aerobic coproporphyrinogen-III oxidase family. In terms of assembly, homodimer. A divalent metal cation serves as cofactor.

It is found in the cytoplasm. It carries out the reaction coproporphyrinogen III + O2 + 2 H(+) = protoporphyrinogen IX + 2 CO2 + 2 H2O. It participates in porphyrin-containing compound metabolism; protoporphyrin-IX biosynthesis; protoporphyrinogen-IX from coproporphyrinogen-III (O2 route): step 1/1. In terms of biological role, involved in the heme biosynthesis. Catalyzes the aerobic oxidative decarboxylation of propionate groups of rings A and B of coproporphyrinogen-III to yield the vinyl groups in protoporphyrinogen-IX. The sequence is that of Oxygen-dependent coproporphyrinogen-III oxidase from Aeromonas hydrophila subsp. hydrophila (strain ATCC 7966 / DSM 30187 / BCRC 13018 / CCUG 14551 / JCM 1027 / KCTC 2358 / NCIMB 9240 / NCTC 8049).